A 513-amino-acid polypeptide reads, in one-letter code: Zinc finger protein 395 (513 aa).

Over residues alanine 17–serine 29 the composition is skewed to low complexity. Residues alanine 17–glutamate 56 are disordered. Polar residues predominate over residues proline 45–glutamine 55. The short motif at methionine 165–leucine 174 is the Nuclear export signal element. Positions lysine 204 to proline 269 are disordered. Over residues isoleucine 209 to threonine 229 the composition is skewed to low complexity. Serine 248 carries the post-translational modification Phosphoserine. Residues tyrosine 280–histidine 305 form a C2H2-type zinc finger. Residues alanine 335–serine 394 form a disordered region. Residues threonine 348 to methionine 359 are compositionally biased toward polar residues. Serine 376 and serine 449 each carry phosphoserine. The segment covering serine 376 to glycine 391 has biased composition (low complexity).

As to quaternary structure, interacts with repression-mediating E2 binding site P2 of human papillomavirus type 8 (HPV8). Widely expressed.

It is found in the cytoplasm. It localises to the nucleus. Functionally, plays a role in papillomavirus genes transcription. In Homo sapiens (Human), this protein is Zinc finger protein 395 (ZNF395).